We begin with the raw amino-acid sequence, 169 residues long: Spore protein SP21 (169 aa).

2 disordered regions span residues 1 to 21 (MADL…REWD) and 150 to 169 (QPKR…HIKA). Residues 47–159 (QGPPAFVPAF…QPKRIQVASS (113 aa)) form the sHSP domain.

This sequence belongs to the small heat shock protein (HSP20) family.

In terms of biological role, may stabilize cellular components during stress and spore formation. The sequence is that of Spore protein SP21 (hspA) from Stigmatella aurantiaca (strain DW4/3-1).